The sequence spans 358 residues: Flap endonuclease 1 (358 aa).

The segment at 1–103 is N-domain; sequence MGIKRLSKLI…HEFEKRTKRR (103 aa). Asp34 contacts Mg(2+). Residues Arg47 and Arg69 each coordinate DNA. Mg(2+)-binding residues include Asp85, Glu157, Glu159, Asp178, and Asp180. The I-domain stretch occupies residues 121–252; sequence LVSKYDRMNV…KRAFEYIKKY (132 aa). Residue Glu157 coordinates DNA. DNA-binding residues include Gly230 and Asp232. Position 232 (Asp232) interacts with Mg(2+). Residues 346–354 are interaction with PCNA; it reads KQTRIDSFF.

Belongs to the XPG/RAD2 endonuclease family. FEN1 subfamily. As to quaternary structure, interacts with PCNA. Three molecules of FEN1 bind to one PCNA trimer with each molecule binding to one PCNA monomer. PCNA stimulates the nuclease activity without altering cleavage specificity. Mg(2+) serves as cofactor. Post-translationally, phosphorylated. Phosphorylation upon DNA damage induces relocalization to the nuclear plasma.

The protein resides in the nucleus. It localises to the nucleolus. It is found in the nucleoplasm. Its subcellular location is the mitochondrion. Its function is as follows. Structure-specific nuclease with 5'-flap endonuclease and 5'-3' exonuclease activities involved in DNA replication and repair. During DNA replication, cleaves the 5'-overhanging flap structure that is generated by displacement synthesis when DNA polymerase encounters the 5'-end of a downstream Okazaki fragment. It enters the flap from the 5'-end and then tracks to cleave the flap base, leaving a nick for ligation. Also involved in the long patch base excision repair (LP-BER) pathway, by cleaving within the apurinic/apyrimidinic (AP) site-terminated flap. Acts as a genome stabilization factor that prevents flaps from equilibrating into structures that lead to duplications and deletions. Also possesses 5'-3' exonuclease activity on nicked or gapped double-stranded DNA, and exhibits RNase H activity. Also involved in replication and repair of rDNA and in repairing mitochondrial DNA. The chain is Flap endonuclease 1 from Enterocytozoon bieneusi (strain H348) (Microsporidian parasite).